The following is a 460-amino-acid chain: Muscarinic acetylcholine receptor M1 (460 aa).

Residues 1-22 (MNTSAPPAVSPNITVLAPGKGP) are Extracellular-facing. Asparagine 2 and asparagine 12 each carry an N-linked (GlcNAc...) asparagine glycan. Residues 23–48 (WQVAFIGITTGLLSLATVTGNLLVLI) traverse the membrane as a helical segment. The Cytoplasmic portion of the chain corresponds to 49-62 (SFKVNTELKTVNNY). Residues 63–84 (FLLSLACADLIIGTFSMNLYTT) form a helical membrane-spanning segment. Residues 85–95 (YLLMGHWALGT) lie on the Extracellular side of the membrane. Residues 96–121 (LACDLWLALDYVASNASVMNLLLISF) traverse the membrane as a helical segment. Residues cysteine 98 and cysteine 178 are joined by a disulfide bond. The Cytoplasmic portion of the chain corresponds to 122–142 (DRYFSVTRPLSYRAKRTPRRA). Residues 143–164 (ALMIGLAWLVSFVLWAPAILFW) form a helical membrane-spanning segment. Over 165-185 (QYLVGERTVLAGQCYIQFLSQ) the chain is Extracellular. The helical transmembrane segment at 186–209 (PIITFGTAMAAFYLPVTVMCTLYW) threads the bilayer. Residues 210–366 (RIYRETENRA…LVKEKKAART (157 aa)) lie on the Cytoplasmic side of the membrane. Disordered regions lie at residues 225 to 256 (LQGS…ETPP), 274 to 296 (WKEE…GEEP), and 310 to 351 (EAQA…QLAK). The residue at position 230 (threonine 230) is a Phosphothreonine. Low complexity predominate over residues 238–247 (SSSSERSQPG). A compositionally biased stretch (basic residues) spans 328–343 (RPTRKGRERAGKGQKP). A helical membrane pass occupies residues 367-390 (LSAILLAFIVTWTPYNIMVLVSTF). Over 391 to 397 (CKDCVPE) the chain is Extracellular. The helical transmembrane segment at 398–420 (TLWELGYWLCYVNSTINPMCYAL) threads the bilayer. Topologically, residues 421 to 460 (CNKAFRDTFRLLLLCRWDKRRWRKIPKRPGSVHRTPSRQC) are cytoplasmic. At threonine 428 the chain carries Phosphothreonine. Serine 451 is subject to Phosphoserine. Phosphothreonine is present on threonine 455. Serine 457 carries the phosphoserine modification.

The protein belongs to the G-protein coupled receptor 1 family. Muscarinic acetylcholine receptor subfamily. CHRM1 sub-subfamily. In terms of assembly, interacts with GPRASP2. Interacts with TMEM147.

Its subcellular location is the cell membrane. It localises to the postsynaptic cell membrane. Functionally, the muscarinic acetylcholine receptor mediates various cellular responses, including inhibition of adenylate cyclase, breakdown of phosphoinositides and modulation of potassium channels through the action of G proteins. Primary transducing effect is Pi turnover. This Sus scrofa (Pig) protein is Muscarinic acetylcholine receptor M1 (CHRM1).